Reading from the N-terminus, the 617-residue chain is E3 ubiquitin-protein ligase ORTHRUS 1 (617 aa).

The PHD-type zinc-finger motif lies at 12-62 (DGVCMRCQVNPPSEETLTCGTCVTPWHVPCLLPESLASSTGEWECPDCSGV). The segment at 129 to 169 (CSICIQLPERPITTPCGHNFCLKCFEKWAVGQGKLTCMICR) adopts an RING-type 1 zinc-finger fold. Positions 258–407 (TRKQGVLVGE…FKVCRYLFVR (150 aa)) constitute a YDG domain. The segment at 495 to 552 (CQICREVLSLPVTTPCAHNFCKACLEAKFAGITQLRERSNGGRKLRAKKNIMTCPCCT) adopts an RING-type 2 zinc-finger fold. Residues 563-593 (QVNREMMEIIENFKKSEEEADASISEEEEEE) adopt a coiled-coil conformation. A disordered region spans residues 575-617 (FKKSEEEADASISEEEEEESEPPTKKIKMDNNSVGGSGTSLSA). Acidic residues predominate over residues 580–595 (EEADASISEEEEEESE). Over residues 604-617 (DNNSVGGSGTSLSA) the composition is skewed to polar residues.

In terms of tissue distribution, expressed in inflorescences and leaves.

The protein localises to the nucleus. The enzyme catalyses S-ubiquitinyl-[E2 ubiquitin-conjugating enzyme]-L-cysteine + [acceptor protein]-L-lysine = [E2 ubiquitin-conjugating enzyme]-L-cysteine + N(6)-ubiquitinyl-[acceptor protein]-L-lysine.. It participates in protein modification; protein ubiquitination. E3 ubiquitin-protein ligase. Participates in CpG methylation-dependent transcriptional regulation and epigenetic transcriptional silencing. Mediates ubiquitination with the E2 ubiquitin-conjugating enzymes UBC11, UBC8 and UBC8 homologs (e.g. UBC10, UBC11, UBC28 and UBC29) but not with UBC27, UBC30, UBC32, UBC34 and UBC36. Promotes methylation-mediated gene silencing leading, for example, to early flowering. Can bind to CpG, CpNpG, and CpNpN DNA motifs, with a strong preference for methylated forms, and with highest affinity for CpG substrate. The polypeptide is E3 ubiquitin-protein ligase ORTHRUS 1 (ORTH1) (Arabidopsis thaliana (Mouse-ear cress)).